The following is a 214-amino-acid chain: MNNLKRFTESIFSCIALSTLLFLGGCQTLPPADDLTPITVSHPDQAKAWELQGKLAIKTPEDKLSANLYWRHSEERDELTLTTMLGTTVLTLEATPNSAHLHIDGKDFKDNNAQDLLERVSGWSIPLADLPLWITGQIGSQDRVLSRDSKANPKQLINDQTPPSWVVEFLSWQLQSGAHIPHQLKLERGDLQLKLQINQWQALGKATIMIGEKP.

An N-terminal signal peptide occupies residues 1 to 25 (MNNLKRFTESIFSCIALSTLLFLGG). Cysteine 26 carries N-palmitoyl cysteine lipidation. The S-diacylglycerol cysteine moiety is linked to residue cysteine 26.

This sequence belongs to the LolB family. As to quaternary structure, monomer.

The protein resides in the cell outer membrane. Functionally, plays a critical role in the incorporation of lipoproteins in the outer membrane after they are released by the LolA protein. The protein is Outer-membrane lipoprotein LolB of Shewanella putrefaciens (strain CN-32 / ATCC BAA-453).